The chain runs to 301 residues: Mas-related G-protein coupled receptor member A6 (301 aa).

Topologically, residues 1–15 (MHRSISIRILITNLM) are extracellular. Residues 16-36 (IVILGLVGLTGNAIVFWLLLF) traverse the membrane as a helical segment. The Cytoplasmic segment spans residues 37–42 (RLRRNA). The helical transmembrane segment at 43-63 (FSIYILNLALADFLFLLCHII) threads the bilayer. Topologically, residues 64-77 (ASTEHILTFSSPNS) are extracellular. A helical membrane pass occupies residues 78–98 (IFINCLYTFRVLLYIAGLNML). The Cytoplasmic portion of the chain corresponds to 99–128 (SAISIERCLSVMCPIWYRCHRPEHTSTVMC). A helical membrane pass occupies residues 129-149 (AMIWVLSLLLCILYRYFCGFL). Residues 150 to 163 (DTKYEDDYGCLAMN) lie on the Extracellular side of the membrane. A helical membrane pass occupies residues 164-184 (FLTTAYLMFLFVVLCVSSLAL). Residues 185-203 (LARLFCGAGRMKLTRLYVT) are Cytoplasmic-facing. The helical transmembrane segment at 204 to 224 (ITLTLLVFLLCGLPCGFYWFL) threads the bilayer. Over 225–240 (LSKIKNVFSVFEFSLY) the chain is Extracellular. Residues 241–261 (LTSVVLTAINSCANPIIYFFV) form a helical membrane-spanning segment. Over 262–301 (GSFRHRLKHQTLKMVLQSALQDTPETPENMVEMSRNKAEL) the chain is Cytoplasmic.

This sequence belongs to the G-protein coupled receptor 1 family. Mas subfamily. Expressed in a subset of sensory neurons that includes nociceptors. Expressed in the subclass of non-peptidergic sensory neurons that are IB4(+) and VR1(-).

It localises to the cell membrane. Orphan receptor. May be a receptor for RFamide-family neuropeptides such as NPFF and NPAF, which are analgesic in vivo. May regulate nociceptor function and/or development, including the sensation or modulation of pain. This is Mas-related G-protein coupled receptor member A6 (Mrgpra6) from Mus musculus (Mouse).